The sequence spans 529 residues: Peptide chain release factor 3 (529 aa).

The tr-type G domain occupies alanine 11–methionine 280. GTP is bound by residues serine 20–threonine 27, aspartate 88–histidine 92, and asparagine 142–aspartate 145.

This sequence belongs to the TRAFAC class translation factor GTPase superfamily. Classic translation factor GTPase family. PrfC subfamily.

It is found in the cytoplasm. Increases the formation of ribosomal termination complexes and stimulates activities of RF-1 and RF-2. It binds guanine nucleotides and has strong preference for UGA stop codons. It may interact directly with the ribosome. The stimulation of RF-1 and RF-2 is significantly reduced by GTP and GDP, but not by GMP. In Photorhabdus laumondii subsp. laumondii (strain DSM 15139 / CIP 105565 / TT01) (Photorhabdus luminescens subsp. laumondii), this protein is Peptide chain release factor 3.